The sequence spans 388 residues: Transcription factor SOX-7 (388 aa).

2 disordered regions span residues 20–46 (DAELSDGQSPPAVPRPPGDKGSESRIR) and 140–197 (RDQN…VDTY). Composition is skewed to basic and acidic residues over residues 36-45 (PGDKGSESRI) and 146-164 (PEKRSGSRGALGEKEDRGE). The HMG box DNA-binding region spans 45–113 (IRRPMNAFMV…QHMQDYPNYK (69 aa)). In terms of domain architecture, Sox C-terminal spans 268 to 388 (VSMMSPVPGC…ATYYNSYSVS (121 aa)).

As to quaternary structure, interacts with CTNNB1/beta-catenin; this interaction may lead to the proteasomal degradation of active CTNNB1 and thus inhibition of Wnt/beta-catenin-stimulated transcription. In terms of tissue distribution, widely expressed in adult and fetal tissues. Present both in mesenchymal and epithelial cells in some adult tissues, including colon. Tends to be down-regulated in prostate adenocarcinomas and colorectal tumors due to promoter hypermethylation.

It is found in the nucleus. It localises to the cytoplasm. Its function is as follows. Binds to and activates the CDH5 promoter, hence plays a role in the transcriptional regulation of genes expressed in the hemogenic endothelium and blocks further differentiation into blood precursors. May be required for the survival of both hematopoietic and endothelial precursors during specification. Competes with GATA4 for binding and activation of the FGF3 promoter. Represses Wnt/beta-catenin-stimulated transcription, probably by targeting CTNNB1 to proteasomal degradation. Binds the DNA sequence 5'-AACAAT-3'. The chain is Transcription factor SOX-7 (SOX7) from Homo sapiens (Human).